Reading from the N-terminus, the 702-residue chain is Protein-glucosylgalactosylhydroxylysine glucosidase (702 aa).

Residue 310–311 (WD) coordinates substrate. E440 (proton donor) is an active-site residue. 508–509 (KQ) is a binding site for substrate.

The protein belongs to the glycosyl hydrolase 65 family.

It catalyses the reaction (5R)-5-O-[alpha-D-glucosyl-(1-&gt;2)-beta-D-galactosyl]-5-hydroxy-L-lysyl-[collagen] + H2O = (5R)-5-O-(beta-D-galactosyl)-5-hydroxy-L-lysyl-[collagen] + D-glucose. Its function is as follows. Catalyzes the hydrolysis of glucose from the disaccharide unit linked to hydroxylysine residues of collagen and collagen-like proteins. The chain is Protein-glucosylgalactosylhydroxylysine glucosidase from Gallus gallus (Chicken).